The primary structure comprises 593 residues: Cryptochrome-2 (593 aa).

The Photolyase/cryptochrome alpha/beta domain maps to Ala22–Leu151. Lys30 is covalently cross-linked (Glycyl lysine isopeptide (Lys-Gly) (interchain with G-Cter in ubiquitin)). Ser90 carries the phosphoserine modification. Residues Lys126 and Lys242 each participate in a glycyl lysine isopeptide (Lys-Gly) (interchain with G-Cter in ubiquitin) cross-link. The residue at position 266 (Ser266) is a Phosphoserine; by MAPK. Ser271 is a binding site for FAD. Ser299 is subject to Phosphoserine. Gln308 contacts FAD. Lys348 is covalently cross-linked (Glycyl lysine isopeptide (Lys-Gly) (interchain with G-Cter in ubiquitin)). Residues His374 and Asp406–Asp408 each bind FAD. The tract at residues Trp390–Ile489 is required for inhibition of CLOCK-BMAL1-mediated transcription. Residues Lys475 and Lys504 each participate in a glycyl lysine isopeptide (Lys-Gly) (interchain with G-Cter in ubiquitin) cross-link. The disordered stretch occupies residues Pro532–Ala593. Over residues Ser537–Gly548 the composition is skewed to low complexity. Ser554 carries the post-translational modification Phosphoserine; by GSK3-beta. Ser558 carries the post-translational modification Phosphoserine; by DYRK1A and MAPK.

Belongs to the DNA photolyase class-1 family. Component of the circadian core oscillator, which includes the CRY proteins, CLOCK or NPAS2, BMAL1 or BMAL2, CSNK1D and/or CSNK1E, TIMELESS, and the PER proteins. Interacts with TIMELESS. Interacts directly with PER1, PER2 and PER3; interaction with PER2 inhibits its ubiquitination and vice versa. Interacts with CLOCK-BMAL1. Interacts with CLOCK. Interacts with BMAL1. Interacts with NFIL3. Interacts with FBXL3. Interacts with FBXL21. FBXL3, PER2 and the cofactor FAD compete for overlapping binding sites. FBXL3 cannot bind CRY2 that interacts already with PER2 or that contains bound FAD. Interacts with PPP5C (via TPR repeats); the interaction down-regulates the PPP5C phosphatase activity on CSNK1E. Interacts with nuclear receptors AR and NR3C1/GR; the interaction is ligand dependent. Interacts with PRKDC and CIART. Interacts with ISCA1 (in vitro). Interacts with DDB1, USP7 and TARDBP. Interacts with HNF4A. Interacts with PPARA. Interacts with PPARD (via domain NR LBD) and NR1I2 (via domain NR LBD) in a ligand-dependent manner. Interacts with PPARG, NR1I3 and VDR in a ligand-dependent manner. FAD is required as a cofactor. It depends on (6R)-5,10-methylene-5,6,7,8-tetrahydrofolate as a cofactor. Phosphorylation on Ser-266 by MAPK is important for the inhibition of CLOCK-BMAL1-mediated transcriptional activity. Phosphorylation by CSKNE requires interaction with PER1 or PER2. Phosphorylated in a circadian manner at Ser-554 and Ser-558 in the suprachiasmatic nucleus (SCN) and liver. Phosphorylation at Ser-558 by DYRK1A promotes subsequent phosphorylation at Ser-554 by GSK3-beta: the two-step phosphorylation at the neighboring Ser residues leads to its proteasomal degradation. Post-translationally, ubiquitinated by the SCF(FBXL3) and SCF(FBXL21) complexes, regulating the balance between degradation and stabilization. The SCF(FBXL3) complex is mainly nuclear and mediates ubiquitination and subsequent degradation of CRY2. In contrast, cytoplasmic SCF(FBXL21) complex-mediated ubiquitination leads to stabilize CRY2 and counteract the activity of the SCF(FBXL3) complex. The SCF(FBXL3) and SCF(FBXL21) complexes probably mediate ubiquitination at different Lys residues. The SCF(FBXL3) complex recognizes and binds CRY2 phosphorylated at Ser-554 and Ser-558. Ubiquitination may be inhibited by PER2. Deubiquitinated by USP7. As to expression, expressed in all tissues examined including fetal brain, fibroblasts, heart, brain, placenta, lung, liver, skeletal muscle, kidney, pancreas, spleen, thymus, prostate, testis, ovary, small intestine, colon and leukocytes. Highest levels in heart and skeletal muscle.

It is found in the cytoplasm. Its subcellular location is the nucleus. With respect to regulation, KL001 (N-[3-(9H-carbazol-9-yl)-2-hydroxypropyl]-N-(2-furanylmethyl)-methanesulfonamide) binds to CRY1 and stabilizes it by inhibiting FBXL3- and ubiquitin-dependent degradation of CRY1 resulting in lengthening of the circadian periods. In terms of biological role, transcriptional repressor which forms a core component of the circadian clock. The circadian clock, an internal time-keeping system, regulates various physiological processes through the generation of approximately 24 hour circadian rhythms in gene expression, which are translated into rhythms in metabolism and behavior. It is derived from the Latin roots 'circa' (about) and 'diem' (day) and acts as an important regulator of a wide array of physiological functions including metabolism, sleep, body temperature, blood pressure, endocrine, immune, cardiovascular, and renal function. Consists of two major components: the central clock, residing in the suprachiasmatic nucleus (SCN) of the brain, and the peripheral clocks that are present in nearly every tissue and organ system. Both the central and peripheral clocks can be reset by environmental cues, also known as Zeitgebers (German for 'timegivers'). The predominant Zeitgeber for the central clock is light, which is sensed by retina and signals directly to the SCN. The central clock entrains the peripheral clocks through neuronal and hormonal signals, body temperature and feeding-related cues, aligning all clocks with the external light/dark cycle. Circadian rhythms allow an organism to achieve temporal homeostasis with its environment at the molecular level by regulating gene expression to create a peak of protein expression once every 24 hours to control when a particular physiological process is most active with respect to the solar day. Transcription and translation of core clock components (CLOCK, NPAS2, BMAL1, BMAL2, PER1, PER2, PER3, CRY1 and CRY2) plays a critical role in rhythm generation, whereas delays imposed by post-translational modifications (PTMs) are important for determining the period (tau) of the rhythms (tau refers to the period of a rhythm and is the length, in time, of one complete cycle). A diurnal rhythm is synchronized with the day/night cycle, while the ultradian and infradian rhythms have a period shorter and longer than 24 hours, respectively. Disruptions in the circadian rhythms contribute to the pathology of cardiovascular diseases, cancer, metabolic syndromes and aging. A transcription/translation feedback loop (TTFL) forms the core of the molecular circadian clock mechanism. Transcription factors, CLOCK or NPAS2 and BMAL1 or BMAL2, form the positive limb of the feedback loop, act in the form of a heterodimer and activate the transcription of core clock genes and clock-controlled genes (involved in key metabolic processes), harboring E-box elements (5'-CACGTG-3') within their promoters. The core clock genes: PER1/2/3 and CRY1/2 which are transcriptional repressors form the negative limb of the feedback loop and interact with the CLOCK|NPAS2-BMAL1|BMAL2 heterodimer inhibiting its activity and thereby negatively regulating their own expression. This heterodimer also activates nuclear receptors NR1D1/2 and RORA/B/G, which form a second feedback loop and which activate and repress BMAL1 transcription, respectively. CRY1 and CRY2 have redundant functions but also differential and selective contributions at least in defining the pace of the SCN circadian clock and its circadian transcriptional outputs. Less potent transcriptional repressor in cerebellum and liver than CRY1, though less effective in lengthening the period of the SCN oscillator. Seems to play a critical role in tuning SCN circadian period by opposing the action of CRY1. With CRY1, dispensable for circadian rhythm generation but necessary for the development of intercellular networks for rhythm synchrony. May mediate circadian regulation of cAMP signaling and gluconeogenesis by blocking glucagon-mediated increases in intracellular cAMP concentrations and in CREB1 phosphorylation. Besides its role in the maintenance of the circadian clock, is also involved in the regulation of other processes. Plays a key role in glucose and lipid metabolism modulation, in part, through the transcriptional regulation of genes involved in these pathways, such as LEP or ACSL4. Represses glucocorticoid receptor NR3C1/GR-induced transcriptional activity by binding to glucocorticoid response elements (GREs). Represses the CLOCK-BMAL1 induced transcription of BHLHE40/DEC1. Represses the CLOCK-BMAL1 induced transcription of NAMPT. Represses PPARD and its target genes in the skeletal muscle and limits exercise capacity. Represses the transcriptional activity of NR1I2. This is Cryptochrome-2 (CRY2) from Homo sapiens (Human).